The following is a 146-amino-acid chain: Snaclec alboaggregin-B subunit beta (146 aa).

The signal sequence occupies residues 1 to 23; it reads MGRFIFGSFGLLVLFLSLSGTGA. A C-type lectin domain is found at 24 to 143; that stretch reads DCPSDWSSYD…CSRTYPFVCK (120 aa). Cystine bridges form between C25-C36, C53-C142, and C119-C134.

It belongs to the snaclec family. Heterodimer of subunits alpha and beta; disulfide-linked. Expressed by the venom gland.

Its subcellular location is the secreted. Functionally, weakly agglutinates platelets at high doses by binding to GPIbalpha (GP1BA). The sequence is that of Snaclec alboaggregin-B subunit beta from Trimeresurus albolabris (White-lipped pit viper).